A 1047-amino-acid polypeptide reads, in one-letter code: Cation efflux system protein CusA (1047 aa).

The next 12 membrane-spanning stretches (helical) occupy residues 14–34 (FLVL…IINT), 338–358 (LSGK…LFLW), 363–383 (ALVA…VMHF), 391–411 (MSLG…IVMI), 446–466 (VGPA…PIFT), 485–505 (AMAG…GYWI), 532–552 (VLHW…TVLW), 871–891 (KLKL…YLAF), 898–918 (LLII…LWWM), 928–948 (TGFI…LMYL), 985–1005 (AMTV…TGAG), and 1012–1032 (IAAP…FIIP).

It belongs to the resistance-nodulation-cell division (RND) (TC 2.A.6) family. The cus efflux system is composed of CusA, CusB, CusC and CusF.

It localises to the cell inner membrane. Part of a cation efflux system that mediates resistance to copper and silver. The polypeptide is Cation efflux system protein CusA (cusA) (Escherichia coli (strain K12)).